We begin with the raw amino-acid sequence, 383 residues long: S-adenosylmethionine synthase (383 aa).

H16 contacts ATP. D18 contributes to the Mg(2+) binding site. E44 is a binding site for K(+). Residues E57 and Q98 each coordinate L-methionine. The segment at 98 to 108 is flexible loop; it reads QSPDIAMGVDI. ATP-binding positions include 158–160, 226–227, D235, 241–242, A258, and K262; these read DQK, RF, and RK. Residue D235 participates in L-methionine binding. K266 lines the L-methionine pocket.

The protein belongs to the AdoMet synthase family. As to quaternary structure, homotetramer; dimer of dimers. Mg(2+) is required as a cofactor. Requires K(+) as cofactor.

It localises to the cytoplasm. The enzyme catalyses L-methionine + ATP + H2O = S-adenosyl-L-methionine + phosphate + diphosphate. The protein operates within amino-acid biosynthesis; S-adenosyl-L-methionine biosynthesis; S-adenosyl-L-methionine from L-methionine: step 1/1. Its function is as follows. Catalyzes the formation of S-adenosylmethionine (AdoMet) from methionine and ATP. The overall synthetic reaction is composed of two sequential steps, AdoMet formation and the subsequent tripolyphosphate hydrolysis which occurs prior to release of AdoMet from the enzyme. The protein is S-adenosylmethionine synthase of Fusobacterium nucleatum subsp. nucleatum (strain ATCC 25586 / DSM 15643 / BCRC 10681 / CIP 101130 / JCM 8532 / KCTC 2640 / LMG 13131 / VPI 4355).